Consider the following 221-residue polypeptide: PKHD-type hydroxylase P9211_12561 (221 aa).

One can recognise a Fe2OG dioxygenase domain in the interval Lys-80–Ser-174. Residues His-98, Asp-100, and His-155 each coordinate Fe cation. Arg-165 is a 2-oxoglutarate binding site.

Fe(2+) serves as cofactor. Requires L-ascorbate as cofactor.

The polypeptide is PKHD-type hydroxylase P9211_12561 (Prochlorococcus marinus (strain MIT 9211)).